The primary structure comprises 300 residues: Neutral protease NprE (300 aa).

Position 139 (aspartate 139) interacts with Ca(2+). Residue histidine 143 coordinates Zn(2+). Glutamate 144 is an active-site residue. The Zn(2+) site is built by histidine 147 and glutamate 167. Residues aspartate 178, aspartate 181, aspartate 183, and glutamate 186 each coordinate Ca(2+). The active-site Proton donor is histidine 228.

It belongs to the peptidase M4 family. Requires Ca(2+) as cofactor. It depends on Zn(2+) as a cofactor.

Its subcellular location is the secreted. It carries out the reaction Similar, but not identical, to that of thermolysin.. Its function is as follows. Extracellular zinc metalloprotease. This is Neutral protease NprE (nprE) from Bacillus pumilus (Bacillus mesentericus).